Consider the following 491-residue polypeptide: UDP-N-acetylmuramate--L-alanine ligase (491 aa).

Position 126–132 (126–132 (GTHGKTT)) interacts with ATP.

This sequence belongs to the MurCDEF family.

It localises to the cytoplasm. The catalysed reaction is UDP-N-acetyl-alpha-D-muramate + L-alanine + ATP = UDP-N-acetyl-alpha-D-muramoyl-L-alanine + ADP + phosphate + H(+). The protein operates within cell wall biogenesis; peptidoglycan biosynthesis. Functionally, cell wall formation. The protein is UDP-N-acetylmuramate--L-alanine ligase of Salmonella arizonae (strain ATCC BAA-731 / CDC346-86 / RSK2980).